The sequence spans 240 residues: UDP-2,3-diacylglucosamine hydrolase (240 aa).

Mn(2+)-binding residues include Asp-8, His-10, Asp-41, Asn-79, and His-114. Residue 79–80 participates in substrate binding; it reads NR. The substrate site is built by Asp-122, Ser-160, Asn-164, Lys-167, and His-195. The Mn(2+) site is built by His-195 and His-197.

This sequence belongs to the LpxH family. It depends on Mn(2+) as a cofactor.

The protein localises to the cell inner membrane. It catalyses the reaction UDP-2-N,3-O-bis[(3R)-3-hydroxytetradecanoyl]-alpha-D-glucosamine + H2O = 2-N,3-O-bis[(3R)-3-hydroxytetradecanoyl]-alpha-D-glucosaminyl 1-phosphate + UMP + 2 H(+). Its pathway is glycolipid biosynthesis; lipid IV(A) biosynthesis; lipid IV(A) from (3R)-3-hydroxytetradecanoyl-[acyl-carrier-protein] and UDP-N-acetyl-alpha-D-glucosamine: step 4/6. Its function is as follows. Hydrolyzes the pyrophosphate bond of UDP-2,3-diacylglucosamine to yield 2,3-diacylglucosamine 1-phosphate (lipid X) and UMP by catalyzing the attack of water at the alpha-P atom. Involved in the biosynthesis of lipid A, a phosphorylated glycolipid that anchors the lipopolysaccharide to the outer membrane of the cell. The protein is UDP-2,3-diacylglucosamine hydrolase of Yersinia enterocolitica serotype O:8 / biotype 1B (strain NCTC 13174 / 8081).